The following is a 31-amino-acid chain: LysM-domain containing protein (31 aa).

The LysM 1 repeat unit spans residues 1–28; that stretch reads YSPSLTDLQSYNAMNGPALKAGDILAVP.

This Jatropha curcas (Barbados nut) protein is LysM-domain containing protein.